Reading from the N-terminus, the 175-residue chain is Interleukin-10 (175 aa).

The signal sequence occupies residues 1-21 (MQTCCQALLLLLAACTLPAHC). 2 disulfide bridges follow: cysteine 26-cysteine 123 and cysteine 77-cysteine 129.

It belongs to the IL-10 family. Homodimer. Interacts with IL10RA and IL10RB. Expressed predominantly in bursa of Fabricius and cecal tonsils with low levels in thymus, liver and lung.

The protein resides in the secreted. Its function is as follows. Major immune regulatory cytokine that acts on many cells of the immune system where it has profound anti-inflammatory functions, limiting excessive tissue disruption caused by inflammation. Mechanistically, IL10 binds to its heterotetrameric receptor comprising IL10RA and IL10RB leading to JAK1 and STAT2-mediated phosphorylation of STAT3. In turn, STAT3 translocates to the nucleus where it drives expression of anti-inflammatory mediators. Targets antigen-presenting cells (APCs) such as macrophages and monocytes and inhibits their release of pro-inflammatory cytokines including granulocyte-macrophage colony-stimulating factor /GM-CSF, granulocyte colony-stimulating factor/G-CSF, IL-1 alpha, IL-1 beta, IL-6, IL-8 and TNF-alpha. Also interferes with antigen presentation by reducing the expression of MHC-class II and co-stimulatory molecules, thereby inhibiting their ability to induce T cell activation. In addition, controls the inflammatory response of macrophages by reprogramming essential metabolic pathways including mTOR signaling. This Gallus gallus (Chicken) protein is Interleukin-10.